Consider the following 428-residue polypeptide: Cell number regulator 13 (428 aa).

Basic and acidic residues predominate over residues 233–280 (PEKETNVKAPEKKGSNYSESKGETAKSFDDDDDYPKKQNGDYPKKQKD). The disordered stretch occupies residues 233-290 (PEKETNVKAPEKKGSNYSESKGETAKSFDDDDDYPKKQNGDYPKKQKDTCSTQRCSSQ). The segment covering 281 to 290 (TCSTQRCSSQ) has biased composition (polar residues). A helical membrane pass occupies residues 354–370 (IMAYSLILSCCCYTCCV).

As to expression, expressed in roots, coleoptiles, leaves, stalks, apical meristems, immature ears, embryos, endosperm, pericarp, silks and tassel spikelets. Not detected in pollen.

It localises to the membrane. This chain is Cell number regulator 13 (CNR13), found in Zea mays (Maize).